A 191-amino-acid polypeptide reads, in one-letter code: Signal peptidase complex catalytic subunit sec11 (191 aa).

The Cytoplasmic segment spans residues 1–14 (MLSFLSSNISNARQ). The helical; Signal-anchor for type II membrane protein transmembrane segment at 15 to 33 (TLAQVLNFALVLSSAFMMW) threads the bilayer. The Lumenal segment spans residues 34 to 191 (KGLSVFTGSS…MGVMVMLQRE (158 aa)). Catalysis depends on charge relay system residues S53, H92, and D133. The tract at residues 177-188 (VLLGIMGVMVML) is C-terminal short (CTS) helix.

This sequence belongs to the peptidase S26B family. As to quaternary structure, component of the signal peptidase complex (SPC) composed of a catalytic subunit SEC11 and three accessory subunits SPC1, SPC2 and SPC3. The complex induces a local thinning of the ER membrane which is used to measure the length of the signal peptide (SP) h-region of protein substrates. This ensures the selectivity of the complex towards h-regions shorter than 18-20 amino acids. SPC associates with the translocon complex.

Its subcellular location is the endoplasmic reticulum membrane. It catalyses the reaction Cleavage of hydrophobic, N-terminal signal or leader sequences from secreted and periplasmic proteins.. In terms of biological role, catalytic component of the signal peptidase complex (SPC) which catalyzes the cleavage of N-terminal signal sequences from nascent proteins as they are translocated into the lumen of the endoplasmic reticulum. Specifically cleaves N-terminal signal peptides that contain a hydrophobic alpha-helix (h-region) shorter than 18-20 amino acids. The sequence is that of Signal peptidase complex catalytic subunit sec11 (sec11) from Aspergillus terreus (strain NIH 2624 / FGSC A1156).